Consider the following 651-residue polypeptide: Probable replication restart protein PriA (651 aa).

Zn(2+) is bound by residues C371, C374, C380, C383, C399, C402, C411, and C414.

The protein belongs to the helicase family. PriA subfamily. In terms of assembly, component of the replication restart primosome. Zn(2+) serves as cofactor.

Its function is as follows. Initiates the restart of stalled replication forks, which reloads the replicative helicase on sites other than the origin of replication. Recognizes and binds to abandoned replication forks and remodels them to uncover a helicase loading site. Promotes assembly of the primosome at these replication forks. The polypeptide is Probable replication restart protein PriA (Mycobacterium leprae (strain TN)).